The following is a 682-amino-acid chain: Potassium-transporting ATPase ATP-binding subunit (682 aa).

The next 4 membrane-spanning stretches (helical) occupy residues 34–54 (PVMF…IAMA), 62–82 (ALFS…ANFA), 219–239 (IALT…TATL), and 254–274 (VLVA…LSAI). D307 serves as the catalytic 4-aspartylphosphate intermediate. Residues D344, E348, 377–384 (FTAQSRMS), and K395 contribute to the ATP site. Positions 518 and 522 each coordinate Mg(2+). 3 helical membrane passes run 588-608 (FAII…LNIM), 616-636 (AILS…PLAL), and 656-676 (IYGL…DLLL).

It belongs to the cation transport ATPase (P-type) (TC 3.A.3) family. Type IA subfamily. The system is composed of three essential subunits: KdpA, KdpB and KdpC.

The protein resides in the cell inner membrane. The enzyme catalyses K(+)(out) + ATP + H2O = K(+)(in) + ADP + phosphate + H(+). Its function is as follows. Part of the high-affinity ATP-driven potassium transport (or Kdp) system, which catalyzes the hydrolysis of ATP coupled with the electrogenic transport of potassium into the cytoplasm. This subunit is responsible for energy coupling to the transport system and for the release of the potassium ions to the cytoplasm. This chain is Potassium-transporting ATPase ATP-binding subunit, found in Escherichia coli (strain SMS-3-5 / SECEC).